The chain runs to 426 residues: Ankyrin repeat-containing protein BDA1 (426 aa).

6 ANK repeats span residues 1 to 29 (MDSK…DILQ), 36 to 65 (IIHT…SFAK), 70 to 99 (YGLS…SLVR), 104 to 134 (GGMT…SIKD), 138 to 167 (NGET…KMRD), and 182 to 212 (GGNT…DRNI). 4 helical membrane passes run 288–308 (ALLV…AQLL), 329–349 (WGCN…LLPV), 355–375 (WWYF…MYMM), and 380–400 (FFFL…VLYV).

It localises to the cell membrane. Its function is as follows. Involved in plant defense. Required for basal resistance against Pseudomonas syringae pv. tomato DC3000. Required for resistance against nonpathogenic bacteria. May be involved in signaling components that function downstream of SNC2 and upstream of NPR1 and WRKY70 to regulate defense responses. This chain is Ankyrin repeat-containing protein BDA1, found in Arabidopsis thaliana (Mouse-ear cress).